The chain runs to 90 residues: Arminin 45266 (90 aa).

The signal sequence occupies residues 1–20 (MKSASLILFVALVALTYARS). Positions 21-59 (YEDVKEEIKNEVEKEILDDLEEENDELDDNTQEVNDPRA) are excised as a propeptide. Position 87 is a threonine amide (threonine 87).

This sequence belongs to the arminin family. In terms of tissue distribution, expressed in entodermal epithelium along the body column.

Its subcellular location is the secreted. The protein resides in the target cell membrane. Antimicrobial peptide with a broad-spectrum antimicrobial activity. Keeps its antibacterial activity under a wide range of salt concentrations that mimic physiological conditions of human blood, which is surprising, since Hydra is an obligate freshwater animal with nearly no salt tolerance. Does not affect red blood cells. This is Arminin 45266 from Hydra vulgaris (Hydra).